The chain runs to 264 residues: Thymidylate synthase (264 aa).

Arginine 21 serves as a coordination point for dUMP. A (6R)-5,10-methylene-5,6,7,8-tetrahydrofolate-binding site is contributed by histidine 51. Residue 126 to 127 (RR) participates in dUMP binding. Cysteine 146 acts as the Nucleophile in catalysis. DUMP contacts are provided by residues 166-169 (RSCD), asparagine 177, and 207-209 (HLY). A (6R)-5,10-methylene-5,6,7,8-tetrahydrofolate-binding site is contributed by aspartate 169. Alanine 263 is a (6R)-5,10-methylene-5,6,7,8-tetrahydrofolate binding site.

This sequence belongs to the thymidylate synthase family. Bacterial-type ThyA subfamily. In terms of assembly, homodimer.

Its subcellular location is the cytoplasm. The enzyme catalyses dUMP + (6R)-5,10-methylene-5,6,7,8-tetrahydrofolate = 7,8-dihydrofolate + dTMP. It functions in the pathway pyrimidine metabolism; dTTP biosynthesis. Catalyzes the reductive methylation of 2'-deoxyuridine-5'-monophosphate (dUMP) to 2'-deoxythymidine-5'-monophosphate (dTMP) while utilizing 5,10-methylenetetrahydrofolate (mTHF) as the methyl donor and reductant in the reaction, yielding dihydrofolate (DHF) as a by-product. This enzymatic reaction provides an intracellular de novo source of dTMP, an essential precursor for DNA biosynthesis. This chain is Thymidylate synthase, found in Escherichia fergusonii (strain ATCC 35469 / DSM 13698 / CCUG 18766 / IAM 14443 / JCM 21226 / LMG 7866 / NBRC 102419 / NCTC 12128 / CDC 0568-73).